The primary structure comprises 136 residues: Immunoglobulin J chain (136 aa).

Cystine bridges form between Cys-12–Cys-100, Cys-71–Cys-91, and Cys-108–Cys-133. Asn-48 carries N-linked (GlcNAc...) (complex) asparagine glycosylation.

Part of the secretory IgA (sIgA) complex that consists of two, four or five IgA monomers, and two additional non-Ig polypeptides, namely the JCHAIN and the secretory component (the proteolytic product of PIGR). Part of the secretory IgM (sIgM) complex that consist of five IgM monomers, and two additional non-Ig polypeptides, namely the JCHAIN and the secretory component (the proteolytic product of PIGR). JCHAIN-containing IgM interacts (via CH4 domain) with FCRM (via Ig-like domain).

It is found in the secreted. Functionally, serves to link two monomer units of either IgM or IgA. In the case of IgM, the J chain-joined dimer is a nucleating unit for the IgM pentamer, and in the case of IgA it induces dimers and/or larger polymers. It also helps to bind these immunoglobulins to secretory component. The protein is Immunoglobulin J chain of Oryctolagus cuniculus (Rabbit).